The sequence spans 519 residues: MSGAKQCPDCGSSDIVEDAHYSQDQVVCADCGCILSEGLITTTAAEESHLQAVRFADSTGENDSMTVSKLRGIVRVRNICRVLRLPDGFSDTAVSYYEQAYKHPLYHSVSIEKKEIIVGCCVYITCRQHQWPITMATICSLVYAKKELFASIFLSIVQVLKLDVPSVSLQNLVMSHCRSFKLFKDSCEVPSHYAEKLDTVSERTVQTVELAYETWLVTGRHPIPIITAAAYISWQSLLPARRLSCSLSRFCKLSDVDLPPPSAIRLRELQGTLIKLSVYLPWLKVLSLNKKTVVQHLGDLLRHRVFLLRKALAVTEAELSRGTLADTEAQLSRGTLADTEAQLSRGTLADTEAQLSRGTLADTEAQLSRGTLADTEAQLSRGTLADTEAQLSRGTLADTEAQLSRGTLADTEAQLSRGTLADTVAQLSRGTLADTEAQLSRGTKALSSNDQPNSTFVFLPPCVSNPRKRSRSIPFPRGHLDITGDEDISDSEIEQYLRTPAEMKEFEQALNRDDELPNA.

The segment at 3–36 (GAKQCPDCGSSDIVEDAHYSQDQVVCADCGCILS) adopts a TFIIB-type zinc-finger fold. Zn(2+) contacts are provided by Cys-7, Cys-10, Cys-28, and Cys-31. Copy 2 of the repeat occupies 173–249 (VMSHCRSFKL…ARRLSCSLSR (77 aa)). Cys-462 is subject to Cysteine sulfenic acid (-SOH). Positions 465–487 (NPRKRSRSIPFPRGHLDITGDED) are disordered.

The protein belongs to the TFIIB family. In terms of assembly, component of TFIIIB complexes. Interacts with TBP and forms a ternary complex with TBp and target DNA sequences. Post-translationally, in response to oxidative stress, a Cys-residue is reversibly oxidized to cysteine sulfenic acid. This impairs formation of a ternary complex with TBP and DNA and down-regulates expression of target genes in response to oxidative stress.

The protein localises to the nucleus. In terms of biological role, general activator of RNA polymerase III transcription. Factor exclusively required for RNA polymerase III transcription of genes with promoter elements upstream of the initiation sites. Contributes to the regulation of gene expression; functions as activator in the absence of oxidative stress. Down-regulates expression of target genes in response to oxidative stress. Overexpression protects cells against apoptosis in response to oxidative stress. In Xenopus tropicalis (Western clawed frog), this protein is Transcription factor IIIB 50 kDa subunit (brf2).